Reading from the N-terminus, the 194-residue chain is Chorion class B protein ERB4 (194 aa).

The signal sequence occupies residues 1–20 (MSSNVIVLCVSALFIQCAVS). Residues 22–72 (CVGRIGSLRGGPFDGWGYDGLGYDGFGIGGWNGRGCGGLGDDIAAAAALGA) form a left arm region. The segment at 73 to 128 (SHGGTLAVVSTSAAPTGLGIASENVYEGSVGVCGNLPFLGTADVAGEFPTAGLGGI) is central domain. The tract at residues 129–194 (DYTCGDGAVG…RGCGCGANYY (66 aa)) is right arm (Gly-rich tandem repeats).

The protein belongs to the chorion protein family.

In terms of biological role, this protein is one of many from the eggshell of the silk moth. The sequence is that of Chorion class B protein ERB4 from Bombyx mori (Silk moth).